The following is a 426-amino-acid chain: Enolase (426 aa).

Q163 contributes to the (2R)-2-phosphoglycerate binding site. Residue E205 is the Proton donor of the active site. Positions 242, 286, and 313 each coordinate Mg(2+). (2R)-2-phosphoglycerate is bound by residues K338, R367, S368, and K389. K338 serves as the catalytic Proton acceptor.

This sequence belongs to the enolase family. Mg(2+) serves as cofactor.

It localises to the cytoplasm. The protein localises to the secreted. It is found in the cell surface. The catalysed reaction is (2R)-2-phosphoglycerate = phosphoenolpyruvate + H2O. It functions in the pathway carbohydrate degradation; glycolysis; pyruvate from D-glyceraldehyde 3-phosphate: step 4/5. In terms of biological role, catalyzes the reversible conversion of 2-phosphoglycerate (2-PG) into phosphoenolpyruvate (PEP). It is essential for the degradation of carbohydrates via glycolysis. The sequence is that of Enolase from Helicobacter pylori (strain Shi470).